The following is a 327-amino-acid chain: Biotin synthase (327 aa).

The Radical SAM core domain occupies 49-275 (RFGREVSLCS…VNPHAEVRMA (227 aa)). Residues Cys-67, Cys-71, and Cys-74 each contribute to the [4Fe-4S] cluster site. The [2Fe-2S] cluster site is built by Ser-112, Cys-143, Cys-203, and Arg-273.

Belongs to the radical SAM superfamily. Biotin synthase family. As to quaternary structure, homodimer. It depends on [4Fe-4S] cluster as a cofactor. The cofactor is [2Fe-2S] cluster.

The catalysed reaction is (4R,5S)-dethiobiotin + (sulfur carrier)-SH + 2 reduced [2Fe-2S]-[ferredoxin] + 2 S-adenosyl-L-methionine = (sulfur carrier)-H + biotin + 2 5'-deoxyadenosine + 2 L-methionine + 2 oxidized [2Fe-2S]-[ferredoxin]. It participates in cofactor biosynthesis; biotin biosynthesis; biotin from 7,8-diaminononanoate: step 2/2. In terms of biological role, catalyzes the conversion of dethiobiotin (DTB) to biotin by the insertion of a sulfur atom into dethiobiotin via a radical-based mechanism. This Maridesulfovibrio salexigens (strain ATCC 14822 / DSM 2638 / NCIMB 8403 / VKM B-1763) (Desulfovibrio salexigens) protein is Biotin synthase.